Here is a 166-residue protein sequence, read N- to C-terminus: P2Y purinoceptor 2 (166 aa).

The Cytoplasmic portion of the chain corresponds to 1-24 (VHRCLGVLRPLHSLRWGRARYARR). A helical transmembrane segment spans residues 25–45 (VAAVVWVLVLACQAPVLYFVT). At 46-72 (TSVRGTRITCHDTSARELFSHFVAYSS) the chain is on the extracellular side. A helical membrane pass occupies residues 73–93 (VMLSLLFAVPFSVILVCYVLM). Topologically, residues 94 to 115 (ARRLLKPAYGTTGGLPRAKRKS) are cytoplasmic. A helical membrane pass occupies residues 116 to 136 (VRTIALVLAVFTLCFLPFHVT). Over 137–159 (RTLYYSFRSLDLSCHTLNAINMA) the chain is Extracellular. Residues 160–166 (YKITRPL) form a helical membrane-spanning segment.

The protein belongs to the G-protein coupled receptor 1 family.

It localises to the cell membrane. Functionally, receptor for ATP and UTP coupled to G-proteins that activate a phosphatidylinositol-calcium second messenger system. This is P2Y purinoceptor 2 (P2RY2) from Cricetulus griseus (Chinese hamster).